We begin with the raw amino-acid sequence, 361 residues long: tRNA(Ile)-lysidine synthase (361 aa).

32–37 provides a ligand contact to ATP; sequence SGGPDS.

Belongs to the tRNA(Ile)-lysidine synthase family.

The protein localises to the cytoplasm. It carries out the reaction cytidine(34) in tRNA(Ile2) + L-lysine + ATP = lysidine(34) in tRNA(Ile2) + AMP + diphosphate + H(+). Functionally, ligates lysine onto the cytidine present at position 34 of the AUA codon-specific tRNA(Ile) that contains the anticodon CAU, in an ATP-dependent manner. Cytidine is converted to lysidine, thus changing the amino acid specificity of the tRNA from methionine to isoleucine. This chain is tRNA(Ile)-lysidine synthase, found in Bradyrhizobium diazoefficiens (strain JCM 10833 / BCRC 13528 / IAM 13628 / NBRC 14792 / USDA 110).